A 323-amino-acid chain; its full sequence is Alpha-tubulin N-acetyltransferase 1 (323 aa).

Residues Met1–Phe190 enclose the N-acetyltransferase domain. At Lys56 the chain carries N6-acetyllysine; by autocatalysis. Phe124 to Arg137 is an acetyl-CoA binding site. Lys146 carries the N6-acetyllysine; by autocatalysis modification. An acetyl-CoA-binding site is contributed by Ser160 to Lys169. The tract at residues Pro196–Asp239 is disordered. Residues Ala209–Ala220 show a composition bias toward low complexity. The span at Lys226–Asp239 shows a compositional bias: basic and acidic residues. N6-acetyllysine; by autocatalysis occurs at positions 233 and 244. Residues Pro252 to Pro287 are disordered. 2 positions are modified to phosphoserine: Ser272 and Ser276. Arg305 carries the post-translational modification Asymmetric dimethylarginine. Phosphoserine is present on Ser315. Residue Arg323 is modified to Omega-N-methylarginine.

This sequence belongs to the acetyltransferase ATAT1 family. In terms of assembly, component of the BBSome complex. Interacts with AP2 alpha-adaptins, including AP2A2, but not with AP1 gamma-adaptin (AP1G1/AP1G2); this interaction is required for efficient alpha-tubulin acetylation, hence clathrin-coated pits are sites of microtubule acetylation. In terms of processing, autoacetylation strongly increases tubulin acetylation.

It localises to the cytoplasm. The protein localises to the membrane. The protein resides in the clathrin-coated pit. Its subcellular location is the cell junction. It is found in the focal adhesion. It localises to the cell projection. The protein localises to the axon. The protein resides in the cytoskeleton. Its subcellular location is the spindle. It catalyses the reaction L-lysyl-[alpha-tubulin] + acetyl-CoA = N(6)-acetyl-L-lysyl-[alpha-tubulin] + CoA + H(+). Functionally, specifically acetylates 'Lys-40' in alpha-tubulin on the lumenal side of microtubules. Promotes microtubule destabilization and accelerates microtubule dynamics; this activity may be independent of acetylation activity. Acetylates alpha-tubulin with a slow enzymatic rate, due to a catalytic site that is not optimized for acetyl transfer. Enters the microtubule through each end and diffuses quickly throughout the lumen of microtubules. Acetylates only long/old microtubules because of its slow acetylation rate since it does not have time to act on dynamically unstable microtubules before the enzyme is released. Required for normal sperm flagellar function. Promotes directional cell locomotion and chemotaxis, through AP2A2-dependent acetylation of alpha-tubulin at clathrin-coated pits that are concentrated at the leading edge of migrating cells. May facilitate primary cilium assembly. The polypeptide is Alpha-tubulin N-acetyltransferase 1 (Macaca mulatta (Rhesus macaque)).